A 533-amino-acid polypeptide reads, in one-letter code: Acid-sensing ion channel 3 (533 aa).

Residues 1–19 (MKPRSGLEEAQRRQASDIR) are Cytoplasmic-facing. The chain crosses the membrane as a helical span at residues 20-40 (VFASSCTMHGLGHIFGPGGLT). A Phosphothreonine; by PKC modification is found at Thr-40. The Extracellular portion of the chain corresponds to 41 to 435 (LRRGLWATAV…EQKAAYEVSE (395 aa)). 7 disulfide bridges follow: Cys-93-Cys-187, Cys-165-Cys-172, Cys-283-Cys-372, Cys-317-Cys-368, Cys-321-Cys-366, Cys-330-Cys-352, and Cys-332-Cys-344. Asn-176 is a glycosylation site (N-linked (GlcNAc...) asparagine). Residues 286–310 (ASLDPDDFDPEPSDPLGSPRPRPSP) are disordered. The N-linked (GlcNAc...) asparagine glycan is linked to Asn-400. A helical transmembrane segment spans residues 436-456 (LLGDIGGQMGLFIGASLLTIL). The short motif at 449 to 451 (GAS) is the GAS motif; ion selectivity filter element. Topologically, residues 457–533 (EILDYLCEVF…HRTCYLVTRL (77 aa)) are cytoplasmic. Ser-523 carries the phosphoserine; by PKC modification. The short motif at 530–533 (VTRL) is the PDZ-binding element.

Belongs to the amiloride-sensitive sodium channel (TC 1.A.6) family. ASIC3 subfamily. Can form homotrimeric channels. Heterotrimer; forms functional heterotrimers producing channel with different properties. Forms heterotrimers with ASIC2; gives rise to a biphasic current with a sustained current which discriminates poorly between Na(+) and K(+). Interacts with STOM; inhibits ASIC3 acid-evoked current. Interacts with LIN7B (via PDZ domain); increases ASIC3 expression at the plasma membrane. Interacts with MAGI1 (via PDZ domain); probably regulates ASIC3. Interacts with GOPC (via PDZ domain); probably regulates ASIC3. Interacts with DLG4 (via PDZ domain); reduces ASIC3 expression at the plasma membrane. Could be phosphorylated by PKC, promoting activation of ASIC2/ASIC3 heterotrimers. Expressed in sciatic nerve and dorsal root ganglion (at protein level). Expressed in sensory neurons of dorsal root ganglion. Expressed in Golgi interneurons in the granular layer. Also found in superior cervical ganglia, spinal cord and brain stem.

The protein localises to the cell membrane. The protein resides in the cytoplasm. The catalysed reaction is Na(+)(in) = Na(+)(out). It catalyses the reaction K(+)(in) = K(+)(out). It carries out the reaction Ca(2+)(in) = Ca(2+)(out). With respect to regulation, inhibited by the diuretic drug amiloride. Inhibited by gadolinium ions. Inhibited by extracellular Ca(2+). Activated by lactate. Salicylic acid, diclofenac and aspirin inhibit the sustained current component. Activated by the vertebrate neuropeptides NPFF and NPSF, and the related FMRFamide. Specifically and reversibly inhibited by the a sea anemone toxin APETx2. ASIC3-containing channels are potentiated by the cono-RFamide CNF-Tx1.1, and probably CNF-Tx1.2 and CNF-Tx1.3 (AC P0DL71). Functionally, forms pH-gated heterotrimeric sodium channels that act as postsynaptic excitatory receptors in the nervous system. Upon extracellular acidification, these channels generate a biphasic current with a fast inactivating and a slow sustained phase. ASIC3 is more sensitive to protons and gates between closed, open, and desensitized states faster than other ASICs. Displays high selectivity for sodium ions but can also permit the permeation of other cations. As a neuronal acid sensor, probably contributes to mechanoreception, acid nociception, and heat nociception. By forming heterotrimeric channels with ASIC2, generates a biphasic current with a fast inactivating and a slow sustained phase, which in sensory neurons is proposed to mediate the pain induced by acidosis that occurs in ischemic, damaged or inflamed tissues. The sequence is that of Acid-sensing ion channel 3 from Rattus norvegicus (Rat).